We begin with the raw amino-acid sequence, 277 residues long: S-formylglutathione hydrolase FrmB (277 aa).

Catalysis depends on charge relay system residues S145, D221, and H254.

The protein belongs to the esterase D family.

The enzyme catalyses S-formylglutathione + H2O = formate + glutathione + H(+). In terms of biological role, serine hydrolase involved in the detoxification of formaldehyde. Hydrolyzes S-formylglutathione to glutathione and formate. In Escherichia coli (strain ATCC 8739 / DSM 1576 / NBRC 3972 / NCIMB 8545 / WDCM 00012 / Crooks), this protein is S-formylglutathione hydrolase FrmB (frmB).